Reading from the N-terminus, the 548-residue chain is Putative malate oxidoreductase [NAD] (548 aa).

The active-site Proton donor is Y96. The Proton acceptor role is filled by K169. Residues E240, D241, and D264 each coordinate a divalent metal cation. Residues 297-300 (AGTA), N410, and N455 contribute to the NAD(+) site.

It belongs to the malic enzymes family. The cofactor is Mg(2+). It depends on Mn(2+) as a cofactor.

It carries out the reaction (S)-malate + NAD(+) = pyruvate + CO2 + NADH. The catalysed reaction is oxaloacetate + H(+) = pyruvate + CO2. This is Putative malate oxidoreductase [NAD] (mez) from Mycobacterium tuberculosis (strain CDC 1551 / Oshkosh).